The chain runs to 106 residues: Large ribosomal subunit protein uL24 (106 aa).

Positions 69 to 106 (SNLNPVDPKTGKATRVGRKVSSEGTLVRYSKKSGEEIK) are disordered.

Belongs to the universal ribosomal protein uL24 family. As to quaternary structure, part of the 50S ribosomal subunit.

Functionally, one of two assembly initiator proteins, it binds directly to the 5'-end of the 23S rRNA, where it nucleates assembly of the 50S subunit. One of the proteins that surrounds the polypeptide exit tunnel on the outside of the subunit. This chain is Large ribosomal subunit protein uL24, found in Bacteroides fragilis (strain ATCC 25285 / DSM 2151 / CCUG 4856 / JCM 11019 / LMG 10263 / NCTC 9343 / Onslow / VPI 2553 / EN-2).